Consider the following 238-residue polypeptide: IkB-like protein (238 aa).

4 ANK repeats span residues 48–77, 86–115, 123–152, and 157–187; these read GSSVFMWICIYGRIDFLKFLFEQESYPGEI, DGNSALHYLAEKKNHLILEEVLGYFGKNGT, NGMTPVMKAAIRGRTSNVLSLIKFGADPTQ, and RGFTAWDWAVFTGNMELVKSLNHDYQKPLYM. A Nuclear localization signal motif is present at residues 80 to 86; sequence PHRRDKD. Positions 202–213 match the Nuclear localization signal motif; sequence KKKPKIIITGCK. The PxIxITxC motif; Interaction with host PPP3CA signature appears at 205–212; the sequence is PKIIITGC. Positions 227–230 match the FLCV motif motif; that stretch reads FLCV.

This sequence belongs to the asfivirus A238L family. As to quaternary structure, interacts with host PPIA. Interacts with host PPP3CA/Calcineurin. Interacts with host RELA/p65; interaction of the 32 kDa form with host RELA results in the formation of a stable complex with NF-kappa-B. Interacts with host PPP3R1. Interacts with host EP300; this interaction inhibits the association of host EP300 with host RELA, JUN and NFATC2. In terms of processing, the protein exists in a 28 kDa and a 32 kDa form, probably due to post-translational modifications which are neither phosphorylation, nor sumoylation.

It is found in the host nucleus. Its subcellular location is the host cytoplasm. In terms of biological role, I-kappa-B- (IkB)-like protein that inhibits the binding of NF-kappa-B to DNA, thereby down-regulating pro-inflammatory cytokine production. Forms a heterodimer with the NF-kappa-B subunit RELA/p65 and prevents the activation of the NF-kappa-B transcription factor. Also inhibits the host calcineurin phosphatase activity, which is required for the induction of nuclear factor of activated T cells(NFAT)-dependent immune response genes. Inhibits calcineurin function, which is required for the induction of nuclear factor of activated T cells (NFAT)-dependent immune response genes. Prevents the binding of substrates to calcineurin without affecting the phosphatase activity. Does not contain the serine residues that are phosphorylated by host IkB kinase and thus is not degraded following stimulation of the NFkB pathway. This chain is IkB-like protein (A238L), found in African swine fever virus (strain Badajoz 1971 Vero-adapted) (Ba71V).